Here is a 572-residue protein sequence, read N- to C-terminus: Proline--tRNA ligase (572 aa).

This sequence belongs to the class-II aminoacyl-tRNA synthetase family. ProS type 1 subfamily. Homodimer.

Its subcellular location is the cytoplasm. It carries out the reaction tRNA(Pro) + L-proline + ATP = L-prolyl-tRNA(Pro) + AMP + diphosphate. In terms of biological role, catalyzes the attachment of proline to tRNA(Pro) in a two-step reaction: proline is first activated by ATP to form Pro-AMP and then transferred to the acceptor end of tRNA(Pro). As ProRS can inadvertently accommodate and process non-cognate amino acids such as alanine and cysteine, to avoid such errors it has two additional distinct editing activities against alanine. One activity is designated as 'pretransfer' editing and involves the tRNA(Pro)-independent hydrolysis of activated Ala-AMP. The other activity is designated 'posttransfer' editing and involves deacylation of mischarged Ala-tRNA(Pro). The misacylated Cys-tRNA(Pro) is not edited by ProRS. This chain is Proline--tRNA ligase, found in Psychrobacter cryohalolentis (strain ATCC BAA-1226 / DSM 17306 / VKM B-2378 / K5).